The chain runs to 170 residues: Fimbrial protein (170 aa).

A propeptide spanning residues 1 to 7 (MNTLQKG) is cleaved from the precursor. Phe8 is modified (N-methylphenylalanine). Residues 8-28 (FTLIELMIVIAIVGILAAVAL) form a helical membrane-spanning segment. A glycan (O-linked (Gal...) serine) is linked at Ser70. An O-(sn-1-glycerophosphoryl)serine modification is found at Ser100. Cys127 and Cys163 form a disulfide bridge.

This sequence belongs to the N-Me-Phe pilin family. In terms of assembly, the pili are polar flexible filaments of about 5.4 nanometers diameter and 2.5 micrometers average length; they consist of only a single polypeptide chain arranged in a helical configuration of five subunits per turn in the assembled pilus. In terms of processing, O-linked glycan consists of GlcNAc-Gal disaccharide.

It is found in the fimbrium. The protein localises to the membrane. Major component of the type IV pilus (T4P) that plays a role in cellular adherence, microcolony formation as well as twitching motility. In Neisseria meningitidis serogroup A / serotype 4A (strain DSM 15465 / Z2491), this protein is Fimbrial protein (pilE).